A 364-amino-acid chain; its full sequence is UDP-N-acetylglucosamine--N-acetylmuramyl-(pentapeptide) pyrophosphoryl-undecaprenol N-acetylglucosamine transferase (364 aa).

UDP-N-acetyl-alpha-D-glucosamine-binding positions include 10–12 (TAG), Asn-124, Arg-161, Ser-195, and Gln-291.

It belongs to the glycosyltransferase 28 family. MurG subfamily.

The protein localises to the cell membrane. The catalysed reaction is di-trans,octa-cis-undecaprenyl diphospho-N-acetyl-alpha-D-muramoyl-L-alanyl-D-glutamyl-meso-2,6-diaminopimeloyl-D-alanyl-D-alanine + UDP-N-acetyl-alpha-D-glucosamine = di-trans,octa-cis-undecaprenyl diphospho-[N-acetyl-alpha-D-glucosaminyl-(1-&gt;4)]-N-acetyl-alpha-D-muramoyl-L-alanyl-D-glutamyl-meso-2,6-diaminopimeloyl-D-alanyl-D-alanine + UDP + H(+). The protein operates within cell wall biogenesis; peptidoglycan biosynthesis. Its function is as follows. Cell wall formation. Catalyzes the transfer of a GlcNAc subunit on undecaprenyl-pyrophosphoryl-MurNAc-pentapeptide (lipid intermediate I) to form undecaprenyl-pyrophosphoryl-MurNAc-(pentapeptide)GlcNAc (lipid intermediate II). The protein is UDP-N-acetylglucosamine--N-acetylmuramyl-(pentapeptide) pyrophosphoryl-undecaprenol N-acetylglucosamine transferase of Streptomyces coelicolor (strain ATCC BAA-471 / A3(2) / M145).